We begin with the raw amino-acid sequence, 406 residues long: Renin (406 aa).

The signal sequence occupies residues 1 to 23 (MDGWRRMPRWGLLLLLWGSCTFG). A propeptide spans 24-66 (LPTDTTTFKRIFLKRMPSIRESLKERGVDMARLGPEWSQPMKR) (activation peptide). The N-linked (GlcNAc...) asparagine glycan is linked to asparagine 71. The region spanning 86 to 403 (YYGEIGIGTP…DRRNNRIGFA (318 aa)) is the Peptidase A1 domain. Aspartate 104 is a catalytic residue. A disulfide bond links cysteine 117 and cysteine 124. N-linked (GlcNAc...) asparagine glycosylation is present at asparagine 141. The cysteines at positions 283 and 287 are disulfide-linked. Aspartate 292 is an active-site residue. A disulfide bridge connects residues cysteine 325 and cysteine 362.

This sequence belongs to the peptidase A1 family. In terms of assembly, interacts with ATP6AP2.

It is found in the secreted. Its subcellular location is the membrane. The enzyme catalyses Cleavage of Leu-|-Xaa bond in angiotensinogen to generate angiotensin I.. Its activity is regulated as follows. Interaction with ATP6AP2 results in a 5-fold increased efficiency in angiotensinogen processing. Its function is as follows. Renin is a highly specific endopeptidase, whose only known function is to generate angiotensin I from angiotensinogen in the plasma, initiating a cascade of reactions that produce an elevation of blood pressure and increased sodium retention by the kidney. This chain is Renin (REN), found in Homo sapiens (Human).